A 156-amino-acid chain; its full sequence is MVRRFKPAVKYRRGSRTHGWGRVGQHRKSGSSGGKGMVGFHKHKWSLVMKYGESGTGWPFYGKHGFKQPPTIAIEWRPINVGSLSDIIKELKKEGKIAEEGGKYVIRLLELGYNKLLGGGHIDVPVIVYTPAASRTAVEKIEKAGGEVRIIPLIHK.

Residues 14–35 (GSRTHGWGRVGQHRKSGSSGGK) are disordered.

Belongs to the universal ribosomal protein uL15 family. Part of the 50S ribosomal subunit.

Binds to the 23S rRNA. The protein is Large ribosomal subunit protein uL15 of Pyrobaculum islandicum (strain DSM 4184 / JCM 9189 / GEO3).